The sequence spans 237 residues: Ribitol-5-phosphate cytidylyltransferase (237 aa).

CTP-binding positions include 7–10 (LAGG) and 80–86 (GEDRNET).

The protein belongs to the IspD/TarI cytidylyltransferase family. TarI subfamily.

The catalysed reaction is D-ribitol 5-phosphate + CTP + H(+) = CDP-L-ribitol + diphosphate. The protein operates within cell wall biogenesis; poly(ribitol phosphate) teichoic acid biosynthesis. Functionally, catalyzes the transfer of the cytidylyl group of CTP to D-ribitol 5-phosphate. The chain is Ribitol-5-phosphate cytidylyltransferase from Listeria monocytogenes serotype 4b (strain F2365).